We begin with the raw amino-acid sequence, 460 residues long: Bifunctional protein GlmU (460 aa).

The pyrophosphorylase stretch occupies residues 1 to 232 (MALNVVILAA…AIEVEGANNR (232 aa)). UDP-N-acetyl-alpha-D-glucosamine-binding positions include 8–11 (LAAG), lysine 22, glutamine 73, 78–79 (GT), 100–102 (YGD), glycine 137, glutamate 157, asparagine 172, and asparagine 230. A Mg(2+)-binding site is contributed by aspartate 102. Position 230 (asparagine 230) interacts with Mg(2+). A linker region spans residues 233-253 (VQLAQLERAYQAREAEKLMLA). The segment at 254–460 (GANLRDPSRI…GWQRPVKIKK (207 aa)) is N-acetyltransferase. UDP-N-acetyl-alpha-D-glucosamine is bound by residues arginine 336 and lysine 354. The Proton acceptor role is filled by histidine 366. Residues tyrosine 369 and asparagine 380 each coordinate UDP-N-acetyl-alpha-D-glucosamine. Acetyl-CoA contacts are provided by residues alanine 383, 389-390 (NY), serine 408, alanine 426, and arginine 443.

In the N-terminal section; belongs to the N-acetylglucosamine-1-phosphate uridyltransferase family. It in the C-terminal section; belongs to the transferase hexapeptide repeat family. Homotrimer. It depends on Mg(2+) as a cofactor.

It is found in the cytoplasm. It catalyses the reaction alpha-D-glucosamine 1-phosphate + acetyl-CoA = N-acetyl-alpha-D-glucosamine 1-phosphate + CoA + H(+). The enzyme catalyses N-acetyl-alpha-D-glucosamine 1-phosphate + UTP + H(+) = UDP-N-acetyl-alpha-D-glucosamine + diphosphate. It functions in the pathway nucleotide-sugar biosynthesis; UDP-N-acetyl-alpha-D-glucosamine biosynthesis; N-acetyl-alpha-D-glucosamine 1-phosphate from alpha-D-glucosamine 6-phosphate (route II): step 2/2. The protein operates within nucleotide-sugar biosynthesis; UDP-N-acetyl-alpha-D-glucosamine biosynthesis; UDP-N-acetyl-alpha-D-glucosamine from N-acetyl-alpha-D-glucosamine 1-phosphate: step 1/1. Its pathway is bacterial outer membrane biogenesis; LPS lipid A biosynthesis. In terms of biological role, catalyzes the last two sequential reactions in the de novo biosynthetic pathway for UDP-N-acetylglucosamine (UDP-GlcNAc). The C-terminal domain catalyzes the transfer of acetyl group from acetyl coenzyme A to glucosamine-1-phosphate (GlcN-1-P) to produce N-acetylglucosamine-1-phosphate (GlcNAc-1-P), which is converted into UDP-GlcNAc by the transfer of uridine 5-monophosphate (from uridine 5-triphosphate), a reaction catalyzed by the N-terminal domain. The chain is Bifunctional protein GlmU from Shewanella baltica (strain OS195).